The sequence spans 423 residues: Osteomodulin (423 aa).

An N-terminal signal peptide occupies residues 1–20; it reads MGFLSPIYVLFFCFGVRVYC. Sulfotyrosine is present on residues Tyr-22, Tyr-25, Tyr-31, Tyr-39, Tyr-51, and Tyr-77. Residues 53–91 enclose the LRRNT domain; that stretch reads VPFYNNILGCAKECFCPTNFPTSMYCDNRKLKTIPIIPM. LRR repeat units follow at residues 92-113, 116-129, 142-164, 165-184, 187-207, 213-233, 234-255, 258-279, 281-294, 301-322, and 331-353; these read HIQQ…SFIN, HLKE…KIKS, NLQQ…PKSL, ERLL…AMDG, NVTM…KEKT, KLMQ…GLPS, SLMY…YFDK, KLHA…IFNL, NLIE…KLKQ, NLEH…MICP, and HLTY…IFFC. Residues Asn-113 and Asn-121 are each glycosylated (N-linked (GlcNAc...) asparagine). A glycan (N-linked (GlcNAc...) asparagine) is linked at Asn-187. Residues Asn-242 and Asn-278 are each glycosylated (N-linked (GlcNAc...) asparagine). An N-linked (GlcNAc...) asparagine glycan is attached at Asn-316. An intrachain disulfide couples Cys-321 to Cys-353. The interval 381–406 is disordered; it reads RSYQEEEEEDDHDSQDNTLEGQEVSD. A sulfotyrosine mark is found at Tyr-413 and Tyr-414.

Belongs to the small leucine-rich proteoglycan (SLRP) family. SLRP class II subfamily. As to quaternary structure, binds the alpha(V)beta(3)-integrin. Glycosylated; contains keratan sulfate. In terms of tissue distribution, bone specific.

Its subcellular location is the secreted. The protein localises to the extracellular space. The protein resides in the extracellular matrix. May be implicated in biomineralization processes. Has a function in binding of osteoblasts via the alpha(V)beta(3)-integrin. The polypeptide is Osteomodulin (Omd) (Mus musculus (Mouse)).